Reading from the N-terminus, the 589-residue chain is NADPH-dependent diflavin oxidoreductase 1 (589 aa).

The Flavodoxin-like domain occupies 5–151 (ITILYGSETG…YYIEWEAELI (147 aa)). FMN-binding positions include 11–16 (SETGNA), 60–63 (STTG), 98–107 (VGDSSYVKYN), and E133. Positions 202–439 (DGLKLGTVLE…SIQRSSFKYK (238 aa)) constitute an FAD-binding FR-type domain. Residues R349, 380 to 383 (RMFS), and 412 to 415 (GVCT) contribute to the FAD site. NADP(+) is bound by residues T452 and 507 to 508 (SR). FAD is bound at residue W589.

Belongs to the NADPH-dependent diflavin oxidoreductase NDOR1 family. This sequence in the N-terminal section; belongs to the flavodoxin family. The protein in the C-terminal section; belongs to the flavoprotein pyridine nucleotide cytochrome reductase family. In terms of assembly, interacts with DRE2; as part of the cytosolic iron-sulfur (Fe-S) protein assembly (CIA) machinery. FAD serves as cofactor. The cofactor is FMN.

The protein resides in the cytoplasm. It is found in the mitochondrion. The enzyme catalyses 2 oxidized [2Fe-2S]-[protein] + NADPH = 2 reduced [2Fe-2S]-[protein] + NADP(+) + H(+). NADPH-dependent reductase which is a central component of the cytosolic iron-sulfur (Fe-S) protein assembly (CIA) machinery. Transfers electrons from NADPH via its FAD and FMN prosthetic groups to the [2Fe-2S] cluster of DRE2, another key component of the CIA machinery. In turn, this reduced cluster provides electrons for assembly of cytosolic iron-sulfur cluster proteins. Positively controls H(2)O(2)-induced cell death. The chain is NADPH-dependent diflavin oxidoreductase 1 from Candida albicans (strain SC5314 / ATCC MYA-2876) (Yeast).